A 54-amino-acid polypeptide reads, in one-letter code: Large ribosomal subunit protein bL32 (54 aa).

The interval 1–26 (MAVQKNKPTRSKRGMRRSHDSLTAPH) is disordered. A compositionally biased stretch (basic residues) spans 7-16 (KPTRSKRGMR).

This sequence belongs to the bacterial ribosomal protein bL32 family.

In Buchnera aphidicola subsp. Acyrthosiphon pisum (strain 5A), this protein is Large ribosomal subunit protein bL32.